Here is a 225-residue protein sequence, read N- to C-terminus: Glutathione S-transferase Mu 3 (225 aa).

In terms of domain architecture, GST N-terminal spans 5–92; sequence SSMVLGYWDI…YIARKHNMCG (88 aa). Glutathione contacts are provided by residues 11–12, 50–54, and 63–64; these read YW, WLDVK, and NL. Residue lysine 54 forms a Glycyl lysine isopeptide (Lys-Gly) (interchain with G-Cter in SUMO2) linkage. Residue lysine 73 forms a Glycyl lysine isopeptide (Lys-Gly) (interchain with G-Cter in SUMO2) linkage. 76–77 contacts glutathione; the sequence is QS. The GST C-terminal domain occupies 94–212; that stretch reads TEEEKIRVDI…QSDQFCKMPI (119 aa). Substrate is bound at residue tyrosine 120.

Belongs to the GST superfamily. Mu family. As to quaternary structure, homodimer. In terms of processing, the N-terminus is blocked. In terms of tissue distribution, testis and brain.

It localises to the cytoplasm. The enzyme catalyses RX + glutathione = an S-substituted glutathione + a halide anion + H(+). In terms of biological role, conjugation of reduced glutathione to a wide number of exogenous and endogenous hydrophobic electrophiles. May govern uptake and detoxification of both endogenous compounds and xenobiotics at the testis and brain blood barriers. This Homo sapiens (Human) protein is Glutathione S-transferase Mu 3 (GSTM3).